The following is a 443-amino-acid chain: Ribulose bisphosphate carboxylase large chain (443 aa).

Residues N89 and T139 each contribute to the substrate site. Catalysis depends on K141, which acts as the Proton acceptor. Residue K143 participates in substrate binding. Positions 167, 169, and 170 each coordinate Mg(2+). At K167 the chain carries N6-carboxylysine. H260 serves as the catalytic Proton acceptor. Residues R261, H293, and S345 each contribute to the substrate site.

This sequence belongs to the RuBisCO large chain family. Type I subfamily. Heterohexadecamer of 8 large chains and 8 small chains; disulfide-linked. The disulfide link is formed within the large subunit homodimers. It depends on Mg(2+) as a cofactor. In terms of processing, the disulfide bond which can form in the large chain dimeric partners within the hexadecamer appears to be associated with oxidative stress and protein turnover.

The protein localises to the plastid. Its subcellular location is the chloroplast. The enzyme catalyses 2 (2R)-3-phosphoglycerate + 2 H(+) = D-ribulose 1,5-bisphosphate + CO2 + H2O. It catalyses the reaction D-ribulose 1,5-bisphosphate + O2 = 2-phosphoglycolate + (2R)-3-phosphoglycerate + 2 H(+). Functionally, ruBisCO catalyzes two reactions: the carboxylation of D-ribulose 1,5-bisphosphate, the primary event in carbon dioxide fixation, as well as the oxidative fragmentation of the pentose substrate in the photorespiration process. Both reactions occur simultaneously and in competition at the same active site. The protein is Ribulose bisphosphate carboxylase large chain of Sesamum indicum (Oriental sesame).